The following is a 259-amino-acid chain: MAFHKPEQIAELVIEAGVQKVSQTLPAMLILGFLGGAFISLGFLLNIRVLGNLPERWGSLVNVLGGAVFPVGLMLVVLAGGELITGNMMSLSMALYAKKITLVSVLNNWVWITFMNFVGAIFVAYCFGHLGGLTEGDYLNKTVAIAEGKLHESFGRTLILAIGCNWLVCLALWLAYGTSDFVGKIIGIWIPIMAFVVIGFQQVVANMFVISAVIFAGHLTWMDLARNFVPVFIGNVIGGAGFVGFAYFACYQKQHSNMK.

The Cytoplasmic portion of the chain corresponds to 1–26; sequence MAFHKPEQIAELVIEAGVQKVSQTLP. A helical transmembrane segment spans residues 27–47; that stretch reads AMLILGFLGGAFISLGFLLNI. The Periplasmic portion of the chain corresponds to 48-66; that stretch reads RVLGNLPERWGSLVNVLGG. A helical transmembrane segment spans residues 67-97; sequence AVFPVGLMLVVLAGGELITGNMMSLSMALYA. Topologically, residues 98–108 are cytoplasmic; sequence KKITLVSVLNN. The helical transmembrane segment at 109 to 130 threads the bilayer; it reads WVWITFMNFVGAIFVAYCFGHL. Over 131–157 the chain is Periplasmic; sequence GGLTEGDYLNKTVAIAEGKLHESFGRT. Residues 158–176 form a helical membrane-spanning segment; sequence LILAIGCNWLVCLALWLAY. Over 177-187 the chain is Cytoplasmic; that stretch reads GTSDFVGKIIG. Residues 188-216 form a helical membrane-spanning segment; the sequence is IWIPIMAFVVIGFQQVVANMFVISAVIFA. The Periplasmic portion of the chain corresponds to 217–227; it reads GHLTWMDLARN. A helical membrane pass occupies residues 228 to 250; it reads FVPVFIGNVIGGAGFVGFAYFAC. Over 251–259 the chain is Cytoplasmic; sequence YQKQHSNMK.

It belongs to the FNT transporter (TC 1.A.16) family.

It localises to the cell inner membrane. The enzyme catalyses formate(in) = formate(out). Its function is as follows. Acts as a formate transporter. This is Formate channel BtFdhC from Bacillus thuringiensis.